The sequence spans 366 residues: Ribosomal RNA large subunit methyltransferase M (366 aa).

S-adenosyl-L-methionine contacts are provided by residues serine 188, cysteine 221–glycine 224, aspartate 240, aspartate 260, and aspartate 277. The Proton acceptor role is filled by lysine 306.

This sequence belongs to the class I-like SAM-binding methyltransferase superfamily. RNA methyltransferase RlmE family. RlmM subfamily. In terms of assembly, monomer.

It localises to the cytoplasm. The catalysed reaction is cytidine(2498) in 23S rRNA + S-adenosyl-L-methionine = 2'-O-methylcytidine(2498) in 23S rRNA + S-adenosyl-L-homocysteine + H(+). In terms of biological role, catalyzes the 2'-O-methylation at nucleotide C2498 in 23S rRNA. This Salmonella paratyphi C (strain RKS4594) protein is Ribosomal RNA large subunit methyltransferase M.